The chain runs to 375 residues: Phytanoyl-CoA hydroxylase-interacting protein-like (375 aa).

Phosphoserine occurs at positions 11, 12, and 15. Residue asparagine 22 is glycosylated (N-linked (GlcNAc...) asparagine). Residue serine 24 is modified to Phosphoserine. N-linked (GlcNAc...) asparagine glycosylation is present at asparagine 36. In terms of domain architecture, Fibronectin type-III spans 51 to 160; it reads VPHNIKINNI…EIIEFCTADY (110 aa).

This sequence belongs to the PHYHIP family.

Its function is as follows. May play a role in the development of the central system. In Rattus norvegicus (Rat), this protein is Phytanoyl-CoA hydroxylase-interacting protein-like (Phyhipl).